The chain runs to 499 residues: Glycerol kinase (499 aa).

Residue Thr13 coordinates ADP. ATP-binding residues include Thr13, Thr14, and Ser15. Thr13 provides a ligand contact to sn-glycerol 3-phosphate. An ADP-binding site is contributed by Arg17. Arg83, Glu84, Tyr135, and Asp245 together coordinate sn-glycerol 3-phosphate. Glycerol contacts are provided by Arg83, Glu84, Tyr135, Asp245, and Gln246. ADP contacts are provided by Thr267 and Gly310. 4 residues coordinate ATP: Thr267, Gly310, Gln314, and Ala411. Ala411 and Asn415 together coordinate ADP.

It belongs to the FGGY kinase family.

The catalysed reaction is glycerol + ATP = sn-glycerol 3-phosphate + ADP + H(+). It participates in polyol metabolism; glycerol degradation via glycerol kinase pathway; sn-glycerol 3-phosphate from glycerol: step 1/1. Inhibited by fructose 1,6-bisphosphate (FBP). In terms of biological role, key enzyme in the regulation of glycerol uptake and metabolism. Catalyzes the phosphorylation of glycerol to yield sn-glycerol 3-phosphate. The chain is Glycerol kinase from Xylella fastidiosa (strain 9a5c).